We begin with the raw amino-acid sequence, 409 residues long: Dihydroorotase (409 aa).

Residues His-57 and His-59 each coordinate Zn(2+). Substrate contacts are provided by residues 59 to 61 (HLR) and Asn-91. 4 residues coordinate Zn(2+): Lys-139, His-168, His-208, and Asp-276. Lys-139 carries the N6-carboxylysine modification. Asp-276 is an active-site residue. Substrate-binding positions include His-280 and 290–291 (AG).

The protein belongs to the metallo-dependent hydrolases superfamily. DHOase family. Class I DHOase subfamily. Zn(2+) is required as a cofactor.

It carries out the reaction (S)-dihydroorotate + H2O = N-carbamoyl-L-aspartate + H(+). It participates in pyrimidine metabolism; UMP biosynthesis via de novo pathway; (S)-dihydroorotate from bicarbonate: step 3/3. In terms of biological role, catalyzes the reversible cyclization of carbamoyl aspartate to dihydroorotate. In Thermococcus kodakarensis (strain ATCC BAA-918 / JCM 12380 / KOD1) (Pyrococcus kodakaraensis (strain KOD1)), this protein is Dihydroorotase.